We begin with the raw amino-acid sequence, 1620 residues long: Putative zinc carboxypeptidase (1620 aa).

At 1–1367 (MLFKNEDSGN…SYDFLYFDEN (1367 aa)) the chain is on the extracellular side. N19 is a glycosylation site (N-linked (GlcNAc...) asparagine). A disordered region spans residues 32–74 (RNDNKNNDNEDNKQDDEEKNDEDDNKSNLLLEENEENKRQGDK). Positions 33-43 (NDNKNNDNEDN) are enriched in basic and acidic residues. The segment covering 44 to 55 (KQDDEEKNDEDD) has biased composition (acidic residues). N-linked (GlcNAc...) asparagine glycosylation is found at N56 and N102. Positions 309–328 (GNHYDAHESTNTYDEEKTRE) are disordered. N-linked (GlcNAc...) asparagine glycans are attached at residues N354, N487, N508, N529, N550, N571, N589, N687, N802, and N1010. The tract at residues 497–559 (VNNLDSTVNY…NSTGNNINNI (63 aa)) is possible malaria epitope. Residues 1004 to 1261 (GENKKNNGTK…FYVQNYFEGY (258 aa)) enclose the Peptidase M14 domain. 2 residues coordinate Zn(2+): H1059 and E1062. 2 N-linked (GlcNAc...) asparagine glycosylation sites follow: N1064 and N1141. H1155 serves as a coordination point for Zn(2+). The active-site Proton donor/acceptor is E1229. The tract at residues 1279 to 1329 (NIKGDDNINGDDNIKGGDNIKGDDNIKRDDNFQRDDNFQRDDNFQRGDNFH) is disordered. Residues 1368 to 1388 (LLFMTGVSFGICLFKFINFLS) form a helical membrane-spanning segment. At 1389–1620 (YHKSSICRRT…SKRKKVIVIL (232 aa)) the chain is on the cytoplasmic side. The interval 1560–1620 (PNGKYKGPGF…SKRKKVIVIL (61 aa)) is disordered. A compositionally biased stretch (basic and acidic residues) spans 1581–1597 (NKNESKTEKKSKTENKS). Basic residues predominate over residues 1598 to 1620 (KSKSKNKSKSKNKSKRKKVIVIL).

It belongs to the peptidase M14 family. Zn(2+) is required as a cofactor.

It is found in the membrane. This Plasmodium falciparum (isolate 3D7) protein is Putative zinc carboxypeptidase.